The chain runs to 259 residues: Dihydroorotate dehydrogenase B (NAD(+)), electron transfer subunit (259 aa).

Residues 2-102 (MQKQNMIVVN…LGPLGHGFPV (101 aa)) enclose the FAD-binding FR-type domain. FAD contacts are provided by residues 53–56 (RPIS), 70–72 (LYR), and 77–78 (GT). Cys221, Cys226, Cys229, and Cys246 together coordinate [2Fe-2S] cluster.

The protein belongs to the PyrK family. As to quaternary structure, heterotetramer of 2 PyrK and 2 PyrD type B subunits. [2Fe-2S] cluster serves as cofactor. FAD is required as a cofactor.

The protein operates within pyrimidine metabolism; UMP biosynthesis via de novo pathway; orotate from (S)-dihydroorotate (NAD(+) route): step 1/1. Its function is as follows. Responsible for channeling the electrons from the oxidation of dihydroorotate from the FMN redox center in the PyrD type B subunit to the ultimate electron acceptor NAD(+). The sequence is that of Dihydroorotate dehydrogenase B (NAD(+)), electron transfer subunit from Bacillus mycoides (strain KBAB4) (Bacillus weihenstephanensis).